Reading from the N-terminus, the 336-residue chain is Probable G-protein coupled receptor 82 (336 aa).

Residues 1–11 (MNNNTTCIQPS) lie on the Extracellular side of the membrane. N-linked (GlcNAc...) asparagine glycosylation is found at Asn-3 and Asn-4. Residues 12-32 (MISSMALPIIYILLCIVGVFG) form a helical membrane-spanning segment. At 33–55 (NTLSQWIFLTKIGKKTSTHIYLS) the chain is on the cytoplasmic side. A helical transmembrane segment spans residues 56 to 76 (HLVTANLLVCSAMPFMSIYFL). The Extracellular segment spans residues 77 to 92 (KGFQWEYQSAQCRVVN). The chain crosses the membrane as a helical span at residues 93-115 (FLGTLSMHASMFVSLLILSWIAI). Over 116 to 156 (SRYATLMQKDSSQETTSCYEKIFYGHLLKKFRQPNFARKLC) the chain is Cytoplasmic. The helical transmembrane segment at 157 to 177 (IYIWGVVLGIIIPVTVYYSVI) threads the bilayer. At 178-197 (EATEGEESLCYNRQMELGAM) the chain is on the extracellular side. Residues 198–218 (ISQIAGLIGTTFIGFSFLVVL) traverse the membrane as a helical segment. The Cytoplasmic portion of the chain corresponds to 219 to 251 (TSYYSFVSHLRKIRTCTSIMEKDLTYSSVKRHL). A helical membrane pass occupies residues 252 to 272 (LVIQILLIVCFLPYSIFKPIF). Over 273 to 336 (YVLHQRDNCQ…SNSAHMQSYG (64 aa)) the chain is Extracellular.

The protein belongs to the G-protein coupled receptor 1 family.

It is found in the cell membrane. Its function is as follows. Orphan receptor. The sequence is that of Probable G-protein coupled receptor 82 (GPR82) from Homo sapiens (Human).